The following is a 794-amino-acid chain: Ubiquitin carboxyl-terminal hydrolase 10 (794 aa).

Alanine 2 carries the N-acetylalanine modification. The tract at residues 2 to 99 is interaction with p53/TP53; sequence ALHNPQYIFG…ILGCPTSKKT (98 aa). Positions 6-21 are G3BP1-binding; the sequence is PQYIFGDFSPDEFNQF. Residues threonine 24 and threonine 99 each carry the phosphothreonine modification. A disordered region spans residues 123-164; sequence ESSSNAEAETLENDSGAGGLGQRERKKKKKRPPGYYSYLKDG. 3 positions are modified to phosphoserine: serine 209, serine 224, and serine 316. The interval 303–326 is disordered; it reads ESADLDPAKPESQSPPAESALSVS. The span at 313–326 shows a compositional bias: polar residues; it reads ESQSPPAESALSVS. Position 332 is a phosphoserine; by ATM (serine 332). 2 positions are modified to phosphoserine: serine 361 and serine 366. The region spanning 411–791 is the USP domain; that stretch reads RGLINKGNWC…TAYLLYYRRV (381 aa). Cysteine 420 acts as the Nucleophile in catalysis. At serine 543 the chain carries Phosphoserine. The disordered stretch occupies residues 546–588; it reads HEKHSVSNGPGSHLIEDEELEDTGEGSEDEWEQVGPKNKTSVT. The segment covering 561–577 has biased composition (acidic residues); the sequence is EDEELEDTGEGSEDEWE. Threonine 568 carries the post-translational modification Phosphothreonine. The residue at position 572 (serine 572) is a Phosphoserine. Residue histidine 745 is the Proton acceptor of the active site.

It belongs to the peptidase C19 family. USP10 subfamily. In terms of assembly, found in a deubiquitination complex with TANK, USP10 and ZC3H12A; this complex inhibits genotoxic stress- or interleukin-1-beta (IL1B)-mediated NF-kappa-B activation by promoting IKBKG or TRAF6 deubiquitination. Interacts with IKBKG; this interaction increases in response to DNA damage. Interacts with TANK; this interaction increases in response to DNA damage. Interacts with TRAF6; this interaction increases in response to DNA damage. Interacts with ZC3H12A; this interaction increases in response to DNA damage. Interacts with G3BP1 (via NTF2 domain) and G3BP2 (via NTF2 domain); inhibiting stress granule formation. In terms of processing, phosphorylated by ATM following DNA damage, leading to stabilization and translocation it to the nucleus. Ubiquitinated. Deubiquitinated by USP13.

Its subcellular location is the cytoplasm. The protein localises to the nucleus. It is found in the early endosome. The enzyme catalyses Thiol-dependent hydrolysis of ester, thioester, amide, peptide and isopeptide bonds formed by the C-terminal Gly of ubiquitin (a 76-residue protein attached to proteins as an intracellular targeting signal).. Specifically inhibited by spautin-1 (specific and potent autophagy inhibitor-1), a derivative of MBCQ that binds to USP10 and inhibits deubiquitinase activity. Regulated by PIK3C3/VPS34-containing complexes. In terms of biological role, hydrolase that can remove conjugated ubiquitin from target proteins such as p53/TP53, RPS2/us5, RPS3/us3, RPS10/eS10, BECN1, SNX3 and CFTR. Acts as an essential regulator of p53/TP53 stability: in unstressed cells, specifically deubiquitinates p53/TP53 in the cytoplasm, leading to counteract MDM2 action and stabilize p53/TP53. Following DNA damage, translocates to the nucleus and deubiquitinates p53/TP53, leading to regulate the p53/TP53-dependent DNA damage response. Component of a regulatory loop that controls autophagy and p53/TP53 levels: mediates deubiquitination of BECN1, a key regulator of autophagy, leading to stabilize the PIK3C3/VPS34-containing complexes. In turn, PIK3C3/VPS34-containing complexes regulate USP10 stability, suggesting the existence of a regulatory system by which PIK3C3/VPS34-containing complexes regulate p53/TP53 protein levels via USP10 and USP13. Does not deubiquitinate MDM2. Plays a key role in 40S ribosome subunit recycling when a ribosome has stalled during translation: acts both by inhibiting formation of stress granules, which store stalled translation pre-initiation complexes, and mediating deubiquitination of 40S ribosome subunits. Acts as a negative regulator of stress granules formation by lowering G3BP1 and G3BP2 valence, thereby preventing G3BP1 and G3BP2 ability to undergo liquid-liquid phase separation (LLPS) and assembly of stress granules. Promotes 40S ribosome subunit recycling following ribosome dissociation in response to ribosome stalling by mediating deubiquitination of 40S ribosomal proteins RPS2/us5, RPS3/us3 and RPS10/eS10, thereby preventing their degradation by the proteasome. Part of a ribosome quality control that takes place when ribosomes have stalled during translation initiation (iRQC): USP10 acts by removing monoubiquitination of RPS2/us5 and RPS3/us3, promoting 40S ribosomal subunit recycling. Deubiquitinates CFTR in early endosomes, enhancing its endocytic recycling. Involved in a TANK-dependent negative feedback response to attenuate NF-kappa-B activation via deubiquitinating IKBKG or TRAF6 in response to interleukin-1-beta (IL1B) stimulation or upon DNA damage. Deubiquitinates TBX21 leading to its stabilization. Plays a negative role in the RLR signaling pathway upon RNA virus infection by blocking the RIGI-mediated MAVS activation. Mechanistically, removes the unanchored 'Lys-63'-linked polyubiquitin chains of MAVS to inhibit its aggregation, essential for its activation. This is Ubiquitin carboxyl-terminal hydrolase 10 (Usp10) from Rattus norvegicus (Rat).